A 149-amino-acid chain; its full sequence is Small ribosomal subunit protein uS19w (149 aa).

This sequence belongs to the universal ribosomal protein uS19 family.

The protein localises to the cytoplasm. In Arabidopsis thaliana (Mouse-ear cress), this protein is Small ribosomal subunit protein uS19w (RPS15E).